We begin with the raw amino-acid sequence, 706 residues long: Probable rhamnogalacturonate lyase B (706 aa).

The signal sequence occupies residues 1-19 (MRLLHPLIPASLLLTLTSA). N-linked (GlcNAc...) asparagine glycans are attached at residues N27, N40, N143, N239, N285, N380, N495, N569, N597, and N638.

It belongs to the polysaccharide lyase 4 family.

The protein resides in the secreted. The catalysed reaction is Endotype eliminative cleavage of L-alpha-rhamnopyranosyl-(1-&gt;4)-alpha-D-galactopyranosyluronic acid bonds of rhamnogalacturonan I domains in ramified hairy regions of pectin leaving L-rhamnopyranose at the reducing end and 4-deoxy-4,5-unsaturated D-galactopyranosyluronic acid at the non-reducing end.. Its function is as follows. Pectinolytic enzymes consist of four classes of enzymes: pectin lyase, polygalacturonase, pectin methylesterase and rhamnogalacturonase. Degrades the rhamnogalacturonan I (RG-I) backbone of pectin. In Aspergillus niger (strain ATCC MYA-4892 / CBS 513.88 / FGSC A1513), this protein is Probable rhamnogalacturonate lyase B (rglB).